Here is a 402-residue protein sequence, read N- to C-terminus: Multidrug resistance protein MdtH (402 aa).

The Cytoplasmic portion of the chain corresponds to 1 to 12; sequence MSRVSQARNLGK. The chain crosses the membrane as a helical span at residues 13–33; sequence YFLLIDNMLVVLGFFVVFPLI. Over 34 to 98 the chain is Periplasmic; the sequence is SIRFVDQMGW…GFATMGIAHE (65 aa). A helical transmembrane segment spans residues 99–116; it reads PWLLWFSCFLSGLGGTLF. Topologically, residues 117–138 are cytoplasmic; it reads DPPRSALVVKLIRPEQRDRFFS. The chain crosses the membrane as a helical span at residues 139-159; that stretch reads LLMMQDSAGAVIGALLGSWLL. Over 160–164 the chain is Periplasmic; sequence QYDFR. Residues 165 to 185 form a helical membrane-spanning segment; sequence LVCATGAILFILCALFNAWLL. Residues 186–213 are Cytoplasmic-facing; the sequence is PAWKLSTVRTPVREGMRRVMSDKRFVTY. Residues 214 to 234 form a helical membrane-spanning segment; that stretch reads VLTLAGYYMLAVQVMLMLPIM. Over 235-243 the chain is Periplasmic; sequence VNDIAGSPA. The chain crosses the membrane as a helical span at residues 244-264; it reads AVKWMYAIEACLSLTLLYPIA. Residues 265-276 lie on the Cytoplasmic side of the membrane; that stretch reads RWSEKRFRLEHR. A helical membrane pass occupies residues 277-297; it reads LMAGLLVMSLSMLPIGMVGNL. Topologically, residues 298–299 are periplasmic; sequence QQ. A helical transmembrane segment spans residues 300 to 320; that stretch reads LFTLICAFYIGSVIAEPARET. The Cytoplasmic segment spans residues 321 to 339; the sequence is LSASLADARARGSYMGFSR. Residues 340 to 360 form a helical membrane-spanning segment; it reads LGLAIGGAIGYIGGGWLFDMG. Residues 361–367 lie on the Periplasmic side of the membrane; that stretch reads KALAQPE. Residues 368–388 traverse the membrane as a helical segment; that stretch reads LPWMMLGIIGFITFLALGWQF. The Cytoplasmic segment spans residues 389-402; that stretch reads SHKRTPRRMLEPGA.

It belongs to the major facilitator superfamily. DHA1 family. MdtH (TC 2.A.1.2.21) subfamily.

It localises to the cell inner membrane. The protein is Multidrug resistance protein MdtH of Salmonella typhimurium (strain LT2 / SGSC1412 / ATCC 700720).